A 156-amino-acid polypeptide reads, in one-letter code: 6,7-dimethyl-8-ribityllumazine synthase (156 aa).

5-amino-6-(D-ribitylamino)uracil-binding positions include phenylalanine 25, 59–61 (AFE), and 83–85 (AVI). Residue 88 to 89 (AT) coordinates (2S)-2-hydroxy-3-oxobutyl phosphate. Histidine 91 (proton donor) is an active-site residue. A 5-amino-6-(D-ribitylamino)uracil-binding site is contributed by phenylalanine 116. (2S)-2-hydroxy-3-oxobutyl phosphate is bound at residue arginine 130.

Belongs to the DMRL synthase family.

It carries out the reaction (2S)-2-hydroxy-3-oxobutyl phosphate + 5-amino-6-(D-ribitylamino)uracil = 6,7-dimethyl-8-(1-D-ribityl)lumazine + phosphate + 2 H2O + H(+). It functions in the pathway cofactor biosynthesis; riboflavin biosynthesis; riboflavin from 2-hydroxy-3-oxobutyl phosphate and 5-amino-6-(D-ribitylamino)uracil: step 1/2. Functionally, catalyzes the formation of 6,7-dimethyl-8-ribityllumazine by condensation of 5-amino-6-(D-ribitylamino)uracil with 3,4-dihydroxy-2-butanone 4-phosphate. This is the penultimate step in the biosynthesis of riboflavin. In Nitratidesulfovibrio vulgaris (strain DSM 19637 / Miyazaki F) (Desulfovibrio vulgaris), this protein is 6,7-dimethyl-8-ribityllumazine synthase.